Here is a 291-residue protein sequence, read N- to C-terminus: Protease HtpX homolog (291 aa).

The next 2 helical transmembrane spans lie at 4-24 and 38-58; these read IVLF…SARL and MGML…ISLM. Histidine 144 contacts Zn(2+). Residue glutamate 145 is part of the active site. Histidine 148 lines the Zn(2+) pocket. Helical transmembrane passes span 152 to 172 and 199 to 219; these read GDMV…IFLA and VSSI…VMFF. Residue glutamate 224 coordinates Zn(2+).

The protein belongs to the peptidase M48B family. Requires Zn(2+) as cofactor.

The protein localises to the cell inner membrane. The protein is Protease HtpX homolog of Prosthecochloris aestuarii (strain DSM 271 / SK 413).